A 385-amino-acid chain; its full sequence is Serpin-Z10 (385 aa).

The segment at 333-357 is RCL; sequence GTEAAAVSVGVVSCTSFRRNPDFVA.

This sequence belongs to the serpin family.

In terms of biological role, probable serine protease inhibitor. The chain is Serpin-Z10 from Arabidopsis thaliana (Mouse-ear cress).